Consider the following 429-residue polypeptide: Gamma-glutamyl phosphate reductase (429 aa).

This sequence belongs to the gamma-glutamyl phosphate reductase family.

Its subcellular location is the cytoplasm. The enzyme catalyses L-glutamate 5-semialdehyde + phosphate + NADP(+) = L-glutamyl 5-phosphate + NADPH + H(+). It participates in amino-acid biosynthesis; L-proline biosynthesis; L-glutamate 5-semialdehyde from L-glutamate: step 2/2. Functionally, catalyzes the NADPH-dependent reduction of L-glutamate 5-phosphate into L-glutamate 5-semialdehyde and phosphate. The product spontaneously undergoes cyclization to form 1-pyrroline-5-carboxylate. The polypeptide is Gamma-glutamyl phosphate reductase (Bradyrhizobium sp. (strain ORS 278)).